The chain runs to 169 residues: Methane monooxygenase component A gamma chain (169 aa).

M.trichosporium has two forms of methane monooxygenase, a soluble and a membrane-bound type. The soluble type consists of four components (A to D): protein A, comprising three chains, in an alpha-2, beta-2, gamma-2 configuration, is a nonheme iron protein containing an unusual mu-hydroxo bridge structure at its active site and interacts with both oxygen and methane.

The catalysed reaction is methane + NADH + O2 + H(+) = methanol + NAD(+) + H2O. It carries out the reaction methane + NADPH + O2 + H(+) = methanol + NADP(+) + H2O. Functionally, responsible for the initial oxygenation of methane to methanol in methanotrophs. It also catalyzes the monohydroxylation of a variety of unactivated alkenes, alicyclic, aromatic and heterocyclic compounds. The protein is Methane monooxygenase component A gamma chain (mmoZ) of Methylosinus trichosporium.